Reading from the N-terminus, the 539-residue chain is CTP synthase (539 aa).

An amidoligase domain region spans residues 1 to 272; that stretch reads MTLRSKMTKY…AQIILSHFKI (272 aa). Serine 19 is a CTP binding site. Serine 19 contributes to the UTP binding site. An ATP-binding site is contributed by 20–25; the sequence is GLGKGV. Tyrosine 60 is an L-glutamine binding site. Aspartate 77 serves as a coordination point for ATP. Mg(2+)-binding residues include aspartate 77 and glutamate 147. CTP is bound by residues 154-156, 193-198, and lysine 229; these read DIE and KSKPTQ. Residues 193 to 198 and lysine 229 contribute to the UTP site; that span reads KSKPTQ. The region spanning 298–539 is the Glutamine amidotransferase type-1 domain; sequence KILMVGKYVE…SFLRVLIKNN (242 aa). Glycine 360 is an L-glutamine binding site. The Nucleophile; for glutamine hydrolysis role is filled by cysteine 387. L-glutamine is bound by residues 388–391, glutamate 410, and arginine 469; that span reads LGFQ. Active-site residues include histidine 514 and glutamate 516.

This sequence belongs to the CTP synthase family. Homotetramer.

The enzyme catalyses UTP + L-glutamine + ATP + H2O = CTP + L-glutamate + ADP + phosphate + 2 H(+). It carries out the reaction L-glutamine + H2O = L-glutamate + NH4(+). The catalysed reaction is UTP + NH4(+) + ATP = CTP + ADP + phosphate + 2 H(+). Its pathway is pyrimidine metabolism; CTP biosynthesis via de novo pathway; CTP from UDP: step 2/2. With respect to regulation, allosterically activated by GTP, when glutamine is the substrate; GTP has no effect on the reaction when ammonia is the substrate. The allosteric effector GTP functions by stabilizing the protein conformation that binds the tetrahedral intermediate(s) formed during glutamine hydrolysis. Inhibited by the product CTP, via allosteric rather than competitive inhibition. Functionally, catalyzes the ATP-dependent amination of UTP to CTP with either L-glutamine or ammonia as the source of nitrogen. Regulates intracellular CTP levels through interactions with the four ribonucleotide triphosphates. The protein is CTP synthase of Mycoplasmopsis pulmonis (strain UAB CTIP) (Mycoplasma pulmonis).